Here is a 1374-residue protein sequence, read N- to C-terminus: DNA-directed RNA polymerase subunit beta (1374 aa).

The protein belongs to the RNA polymerase beta chain family. In terms of assembly, the RNAP catalytic core consists of 2 alpha, 1 beta, 1 beta' and 1 omega subunit. When a sigma factor is associated with the core the holoenzyme is formed, which can initiate transcription.

It catalyses the reaction RNA(n) + a ribonucleoside 5'-triphosphate = RNA(n+1) + diphosphate. Functionally, DNA-dependent RNA polymerase catalyzes the transcription of DNA into RNA using the four ribonucleoside triphosphates as substrates. This chain is DNA-directed RNA polymerase subunit beta, found in Acidovorax ebreus (strain TPSY) (Diaphorobacter sp. (strain TPSY)).